Reading from the N-terminus, the 350-residue chain is Trans-enoyl reductase iliB (350 aa).

Residue 50–53 participates in NADP(+) binding; sequence VDGK. 145 to 152 is a substrate binding site; the sequence is AAIATVGL. NADP(+) is bound by residues 177–180, tyrosine 195, and 242–243; these read SAAS and LD. A substrate-binding site is contributed by 262-266; the sequence is TPTQF. 331–332 is an NADP(+) binding site; the sequence is IK.

It belongs to the zinc-containing alcohol dehydrogenase family. As to quaternary structure, monomer.

It catalyses the reaction N-[(4E,6E,10S,12Z,14E)-6,10-dimethyl-3-oxohexadeca-4,6,12,14-tetraenoyl]-L-tyrosyl-[ACP] = (3E,5S)-3-[(2E,4E,8S,10E,12Z)-1-hydroxy-4,8-dimethyltetradeca-2,4,10,12-tetraen-1-ylidene]-5-[(4-hydroxyphenyl)methyl]pyrrolidine-2,4-dione + holo-[ACP] + H(+). Its pathway is mycotoxin biosynthesis. Trans-enoyl reductase; part of the gene cluster that mediates the biosynthesis of ilicicolin H, a 4-hydroxy-2-pyridonealkaloid that has potent and broad antifungal activities by inhibiting the mitochondrial respiration chain. IliB collaborates with the hybrid PKS-NRPS synthetase iliA to assemble the backbone of ilicicolin H. The PKS portion of iliA and trans-acting enoyl reductase iliB work together to construct an octaketide, and two methyl groups are introduced by the MT domain of iliA during the chain assembly. The nascent chain is then condensed with tyrosine, catalyzed by the iliA C domain, and the resulting PKS-NRPS hybrid is offloaded by the iliA RED domain to form an advanced tetramic acid intermediate. The biosynthesis of ilicicolin H starts with formation of the tetramic acid by the hybrid PKS-NRPS synthetase iliA with the partnering trans-enoyl reductase iliB since iliA lacks a designated enoylreductase (ER) domain. The cytochrome P450 monooxygenase iliC then catalyzes the ring expansion of the tetramate to the acyclic 2-pyridone. The pericyclase iliD further converts the acyclic 2-pyridone into 8-epi-ilicicolin H. 8-epi-ilicicolin H might then spontaneously convert to ilicicolin H since ilicicolin H is produced in the absence of the epimerase iliE, in contrast to what was observed for the Talaromyces variabilis ilicolin H biosynthetic pathway. The protein is Trans-enoyl reductase iliB of Hypocrea jecorina (strain QM6a) (Trichoderma reesei).